A 264-amino-acid chain; its full sequence is Ribosomal protein L11 methyltransferase (264 aa).

S-adenosyl-L-methionine-binding residues include Thr-116, Gly-137, Asp-159, and Asn-200.

The protein belongs to the methyltransferase superfamily. PrmA family.

The protein localises to the cytoplasm. It carries out the reaction L-lysyl-[protein] + 3 S-adenosyl-L-methionine = N(6),N(6),N(6)-trimethyl-L-lysyl-[protein] + 3 S-adenosyl-L-homocysteine + 3 H(+). Methylates ribosomal protein L11. This Thermotoga neapolitana (strain ATCC 49049 / DSM 4359 / NBRC 107923 / NS-E) protein is Ribosomal protein L11 methyltransferase.